Here is a 162-residue protein sequence, read N- to C-terminus: MPSFDVVSEVDLMEVENAFNQARKEIAQRFDFKGTHTELERDKEQNVLIRAGSEGRAEAALQVLMEKLAKRGVALESLDPQKLEPASGGHVRQLVKLKRGLKVEDARKIVAKVKESGIKVQAAIQGEAVRVTGKKRDDLQAAIHAIRAAGFPIPLQFQNFRE.

It belongs to the YajQ family.

Nucleotide-binding protein. This Anaeromyxobacter dehalogenans (strain 2CP-C) protein is Nucleotide-binding protein Adeh_0094.